We begin with the raw amino-acid sequence, 617 residues long: tRNA 5-methylaminomethyl-2-thiouridine biosynthesis bifunctional protein MnmC (617 aa).

The tract at residues 1–226 is tRNA (mnm(5)s(2)U34)-methyltransferase; sequence MLDWQNGQLY…KREMLQGDLP (226 aa). An FAD-dependent cmnm(5)s(2)U34 oxidoreductase region spans residues 241-617; it reads IGGGIAGCAA…SPAIPVSIKG (377 aa).

It in the N-terminal section; belongs to the methyltransferase superfamily. tRNA (mnm(5)s(2)U34)-methyltransferase family. This sequence in the C-terminal section; belongs to the DAO family. Requires FAD as cofactor.

It localises to the cytoplasm. It catalyses the reaction 5-aminomethyl-2-thiouridine(34) in tRNA + S-adenosyl-L-methionine = 5-methylaminomethyl-2-thiouridine(34) in tRNA + S-adenosyl-L-homocysteine + H(+). Functionally, catalyzes the last two steps in the biosynthesis of 5-methylaminomethyl-2-thiouridine (mnm(5)s(2)U) at the wobble position (U34) in tRNA. Catalyzes the FAD-dependent demodification of cmnm(5)s(2)U34 to nm(5)s(2)U34, followed by the transfer of a methyl group from S-adenosyl-L-methionine to nm(5)s(2)U34, to form mnm(5)s(2)U34. This is tRNA 5-methylaminomethyl-2-thiouridine biosynthesis bifunctional protein MnmC from Nitrosospira multiformis (strain ATCC 25196 / NCIMB 11849 / C 71).